Consider the following 101-residue polypeptide: Large ribosomal subunit protein uL23 (101 aa).

It belongs to the universal ribosomal protein uL23 family. Part of the 50S ribosomal subunit. Contacts protein L29, and trigger factor when it is bound to the ribosome.

In terms of biological role, one of the early assembly proteins it binds 23S rRNA. One of the proteins that surrounds the polypeptide exit tunnel on the outside of the ribosome. Forms the main docking site for trigger factor binding to the ribosome. The protein is Large ribosomal subunit protein uL23 of Mannheimia succiniciproducens (strain KCTC 0769BP / MBEL55E).